Reading from the N-terminus, the 179-residue chain is Large ribosomal subunit protein uL6 (179 aa).

The protein belongs to the universal ribosomal protein uL6 family. As to quaternary structure, part of the 50S ribosomal subunit.

Its function is as follows. This protein binds to the 23S rRNA, and is important in its secondary structure. It is located near the subunit interface in the base of the L7/L12 stalk, and near the tRNA binding site of the peptidyltransferase center. The protein is Large ribosomal subunit protein uL6 of Geobacter sulfurreducens (strain ATCC 51573 / DSM 12127 / PCA).